Reading from the N-terminus, the 227-residue chain is 2,3-bisphosphoglycerate-dependent phosphoglycerate mutase (227 aa).

Residues 8 to 15, 21 to 22, arginine 58, 110 to 113, lysine 121, 137 to 138, and 181 to 182 each bind substrate; these read RHGKSVWN, TG, ERMY, RR, and GN. Residue histidine 9 is the Tele-phosphohistidine intermediate of the active site. The Proton donor/acceptor role is filled by glutamate 110.

The protein belongs to the phosphoglycerate mutase family. BPG-dependent PGAM subfamily.

It carries out the reaction (2R)-2-phosphoglycerate = (2R)-3-phosphoglycerate. The protein operates within carbohydrate degradation; glycolysis; pyruvate from D-glyceraldehyde 3-phosphate: step 3/5. Functionally, catalyzes the interconversion of 2-phosphoglycerate and 3-phosphoglycerate. The protein is 2,3-bisphosphoglycerate-dependent phosphoglycerate mutase of Chlamydia abortus (strain DSM 27085 / S26/3) (Chlamydophila abortus).